Here is an 83-residue protein sequence, read N- to C-terminus: Cytochrome c oxidase subunit 7A2, mitochondrial (83 aa).

Residues 1–23 (MLRNLLALRQIAQRTISTTSRRH) constitute a mitochondrion transit peptide. At 24–48 (FENKVPEKQKLFQEDNGMPVHLKGG) the chain is on the mitochondrial matrix side. K33 is subject to N6-acetyllysine. The chain crosses the membrane as a helical span at residues 49–77 (ASDALLYRATMALTLGGTAYAIYLLAMAA). Over 78–83 (FPKKQN) the chain is Mitochondrial intermembrane.

The protein belongs to the cytochrome c oxidase VIIa family. Component of the cytochrome c oxidase (complex IV, CIV), a multisubunit enzyme composed of 14 subunits. The complex is composed of a catalytic core of 3 subunits MT-CO1, MT-CO2 and MT-CO3, encoded in the mitochondrial DNA, and 11 supernumerary subunits COX4I, COX5A, COX5B, COX6A, COX6B, COX6C, COX7A, COX7B, COX7C, COX8 and NDUFA4, which are encoded in the nuclear genome. The complex exists as a monomer or a dimer and forms supercomplexes (SCs) in the inner mitochondrial membrane with NADH-ubiquinone oxidoreductase (complex I, CI) and ubiquinol-cytochrome c oxidoreductase (cytochrome b-c1 complex, complex III, CIII), resulting in different assemblies (supercomplex SCI(1)III(2)IV(1) and megacomplex MCI(2)III(2)IV(2)). Interacts with PET100.

The protein resides in the mitochondrion inner membrane. The protein operates within energy metabolism; oxidative phosphorylation. Its function is as follows. Component of the cytochrome c oxidase, the last enzyme in the mitochondrial electron transport chain which drives oxidative phosphorylation. The respiratory chain contains 3 multisubunit complexes succinate dehydrogenase (complex II, CII), ubiquinol-cytochrome c oxidoreductase (cytochrome b-c1 complex, complex III, CIII) and cytochrome c oxidase (complex IV, CIV), that cooperate to transfer electrons derived from NADH and succinate to molecular oxygen, creating an electrochemical gradient over the inner membrane that drives transmembrane transport and the ATP synthase. Cytochrome c oxidase is the component of the respiratory chain that catalyzes the reduction of oxygen to water. Electrons originating from reduced cytochrome c in the intermembrane space (IMS) are transferred via the dinuclear copper A center (CU(A)) of subunit 2 and heme A of subunit 1 to the active site in subunit 1, a binuclear center (BNC) formed by heme A3 and copper B (CU(B)). The BNC reduces molecular oxygen to 2 water molecules using 4 electrons from cytochrome c in the IMS and 4 protons from the mitochondrial matrix. The sequence is that of Cytochrome c oxidase subunit 7A2, mitochondrial (Cox7a2) from Mus musculus (Mouse).